The chain runs to 508 residues: Putative adenosylhomocysteinase 3 (508 aa).

Position 4 is a phosphoserine (Ser-4). A disordered region spans residues 24 to 81 (DQKQEFNKRPTKIGRRSLSRSISQSSTDSYSSAASYTDSSDDETSPRDKQQKNSKGSS). Basic residues predominate over residues 32–41 (RPTKIGRRSL). Over residues 42-61 (SRSISQSSTDSYSSAASYTD) the composition is skewed to low complexity. Phosphoserine is present on residues Ser-46, Ser-49, Ser-52, and Ser-55. Substrate is bound by residues Thr-133, Asp-207, and Glu-232. Position 233–235 (233–235 (SVT)) interacts with NAD(+). Substrate is bound by residues Lys-262 and Asp-266. NAD(+) is bound by residues Asn-267, 298 to 303 (GEVGKG), Glu-319, Asn-354, 375 to 377 (IGH), and Asn-422.

Belongs to the adenosylhomocysteinase family. In terms of assembly, homotetramer. Forms heteromultimers with AHCYL1 (via the C-terminal region). Interacts with ITPR1; with lower affinity than AHCYL1 and maybe via ITPR1. Interacts with SLC4A4. Interacts with ZCCHC4. NAD(+) is required as a cofactor.

The protein localises to the cytoplasm. It localises to the microsome. The enzyme catalyses S-adenosyl-L-homocysteine + H2O = L-homocysteine + adenosine. The protein operates within amino-acid biosynthesis; L-homocysteine biosynthesis; L-homocysteine from S-adenosyl-L-homocysteine: step 1/1. Functionally, may regulate the electrogenic sodium/bicarbonate cotransporter SLC4A4 activity and Mg(2+)-sensitivity. On the contrary of its homolog AHCYL1, does not regulate ITPR1 sensitivity to inositol 1,4,5-trisphosphate. This is Putative adenosylhomocysteinase 3 (AHCYL2) from Pongo abelii (Sumatran orangutan).